A 506-amino-acid polypeptide reads, in one-letter code: Carboxyl-terminal PDZ ligand of neuronal nitric oxide synthase protein (506 aa).

The 171-residue stretch at 26–196 (FQHGICFEAK…ESERNSNSSG (171 aa)) folds into the PID domain. Disordered regions lie at residues 175-224 (HTQQ…VEVP) and 241-260 (DAVGKEGGSHTGSKVSHPQE). A phosphoserine mark is found at S188, S192, and S195. Residues 203–213 (TGAERASTATA) show a composition bias toward low complexity. The residue at position 266 (S266) is a Phosphoserine. Residues 322–363 (AAEAAARLEAQARVHQLLLQNKDMLQHISLLVKQVQELELKL) are a coiled coil. Phosphoserine is present on residues S371, S374, S401, and S417. The segment at 494–506 (QELGDGLDDEIAV) is interaction with NOS1. Residues 504 to 506 (IAV) carry the PDZ-binding motif.

Interacts with the PDZ domain of NOS1 or the second PDZ domain of DLG4 through its C-terminus. Interacts with RASD1 and SYN1, SYN2 and SYN3 via its PID domain. Forms a ternary complex with NOS1 and RASD1. Forms a ternary complex with NOS1 and SYN1. Expressed in kidney glomeruli podocytes.

The protein localises to the cell projection. It localises to the filopodium. The protein resides in the podosome. In terms of biological role, adapter protein involved in neuronal nitric-oxide (NO) synthesis regulation via its association with nNOS/NOS1. The complex formed with NOS1 and synapsins is necessary for specific NO and synapsin functions at a presynaptic level. Mediates an indirect interaction between NOS1 and RASD1 leading to enhance the ability of NOS1 to activate RASD1. Competes with DLG4 for interaction with NOS1, possibly affecting NOS1 activity by regulating the interaction between NOS1 and DLG4. In kidney podocytes, plays a role in podosomes and filopodia formation through CDC42 activation. The polypeptide is Carboxyl-terminal PDZ ligand of neuronal nitric oxide synthase protein (Homo sapiens (Human)).